A 933-amino-acid polypeptide reads, in one-letter code: Melanoma-associated antigen E1 (933 aa).

4 disordered regions span residues Met1–Gly113, Gly149–Leu236, Ser256–Thr282, and Thr360–Asn393. Positions Ser8 to Gly23 are enriched in basic residues. 4 stretches are compositionally biased toward polar residues: residues Gly64 to Thr97, Gly149 to Pro166, Gly173 to Ser184, and Ala219 to Leu236. MAGE domains follow at residues Met467–Ala666 and Leu721–Ala912. Positions Ser719–Arg933 are interaction with DTNA.

In terms of assembly, interacts with DTNA. Interacts with TRIM28.

The protein resides in the cytoplasm. It localises to the perinuclear region. The protein localises to the nucleus. It is found in the cell membrane. Its function is as follows. May enhance ubiquitin ligase activity of RING-type zinc finger-containing E3 ubiquitin-protein ligases. Proposed to act through recruitment and/or stabilization of the Ubl-conjugating enzyme (E2) at the E3:substrate complex. This chain is Melanoma-associated antigen E1 (Magee1), found in Rattus norvegicus (Rat).